The sequence spans 553 residues: RNA exonuclease 1 (553 aa).

S24 carries the phosphoserine modification. A coiled-coil region spans residues M167 to L194. Positions I225–T373 constitute an Exonuclease domain. Positions W509–E533 form a coiled coil.

The protein belongs to the REXO1/REXO3 family.

It localises to the nucleus. Functionally, 3' exoribonuclease required for 5S rRNA maturation and for the proper maturation of the 5' cistron of the tRNA-Arg3 dicistronic gene. Involved with REX2 in the maturation of the 5.8S rRNA, and with REX2 and REX3, in the 3' processing of the U5L snRNA. The polypeptide is RNA exonuclease 1 (RNH70) (Saccharomyces cerevisiae (strain ATCC 204508 / S288c) (Baker's yeast)).